We begin with the raw amino-acid sequence, 198 residues long: Peptidyl-tRNA hydrolase (198 aa).

Residue Y18 participates in tRNA binding. The active-site Proton acceptor is the H23. Residues F69, N71, and N117 each coordinate tRNA.

It belongs to the PTH family. Monomer.

The protein resides in the cytoplasm. The enzyme catalyses an N-acyl-L-alpha-aminoacyl-tRNA + H2O = an N-acyl-L-amino acid + a tRNA + H(+). In terms of biological role, hydrolyzes ribosome-free peptidyl-tRNAs (with 1 or more amino acids incorporated), which drop off the ribosome during protein synthesis, or as a result of ribosome stalling. Catalyzes the release of premature peptidyl moieties from peptidyl-tRNA molecules trapped in stalled 50S ribosomal subunits, and thus maintains levels of free tRNAs and 50S ribosomes. The polypeptide is Peptidyl-tRNA hydrolase (Idiomarina loihiensis (strain ATCC BAA-735 / DSM 15497 / L2-TR)).